The chain runs to 364 residues: A-type ATP synthase subunit C (364 aa).

This sequence belongs to the V-ATPase V0D/AC39 subunit family. As to quaternary structure, has multiple subunits with at least A(3), B(3), C, D, E, F, H, I and proteolipid K(x).

The protein resides in the cell membrane. Component of the A-type ATP synthase that produces ATP from ADP in the presence of a proton gradient across the membrane. This is A-type ATP synthase subunit C from Desulfurococcus sp. (strain SY).